The following is an 824-amino-acid chain: Acyl-homoserine lactone acylase QuiP (824 aa).

Positions 1-26 (MASPALRHFLPRFGAAAAAASFLSLA) are cleaved as a signal peptide. The active-site Nucleophile is serine 264.

It belongs to the peptidase S45 family. As to quaternary structure, heterodimer of an alpha subunit and a beta subunit processed from the same precursor.

It is found in the periplasm. It catalyses the reaction an N-acyl-L-homoserine lactone + H2O = L-homoserine lactone + a carboxylate. In terms of biological role, catalyzes the deacylation of acyl-homoserine lactone (AHL or acyl-HSL), releasing homoserine lactone (HSL) and the corresponding fatty acid. Possesses a specificity for the degradation of long-chain acyl-HSLs (side chains of seven or more carbons in length). The sequence is that of Acyl-homoserine lactone acylase QuiP (quiP) from Pseudomonas syringae pv. syringae (strain B728a).